The sequence spans 357 residues: Aspartate carbamoyltransferase catalytic subunit (357 aa).

The span at 1 to 17 (MSNSIDSQSIPTISPTD) shows a compositional bias: polar residues. A disordered region spans residues 1-21 (MSNSIDSQSIPTISPTDYTKF). Carbamoyl phosphate-binding residues include arginine 97 and threonine 98. Position 125 (lysine 125) interacts with L-aspartate. Carbamoyl phosphate-binding residues include arginine 147, histidine 177, and glutamine 180. Arginine 211 and arginine 266 together coordinate L-aspartate. 2 residues coordinate carbamoyl phosphate: glycine 307 and proline 308.

The protein belongs to the aspartate/ornithine carbamoyltransferase superfamily. ATCase family. As to quaternary structure, heterododecamer (2C3:3R2) of six catalytic PyrB chains organized as two trimers (C3), and six regulatory PyrI chains organized as three dimers (R2).

It carries out the reaction carbamoyl phosphate + L-aspartate = N-carbamoyl-L-aspartate + phosphate + H(+). Its pathway is pyrimidine metabolism; UMP biosynthesis via de novo pathway; (S)-dihydroorotate from bicarbonate: step 2/3. Its function is as follows. Catalyzes the condensation of carbamoyl phosphate and aspartate to form carbamoyl aspartate and inorganic phosphate, the committed step in the de novo pyrimidine nucleotide biosynthesis pathway. The polypeptide is Aspartate carbamoyltransferase catalytic subunit (Psychrobacter arcticus (strain DSM 17307 / VKM B-2377 / 273-4)).